Reading from the N-terminus, the 57-residue chain is Large ribosomal subunit protein bL33 (57 aa).

The protein belongs to the bacterial ribosomal protein bL33 family.

The sequence is that of Large ribosomal subunit protein bL33 from Shewanella halifaxensis (strain HAW-EB4).